The chain runs to 557 residues: Membrane protein insertase YidC (557 aa).

A helical membrane pass occupies residues 7–27; sequence ILLVALAVVSYLLVLQWNQDY. The tract at residues 42 to 77 is disordered; that stretch reads ASPALPETVPGDSSTSADVPTAGSGNQVPDSAASTA. The span at 52-77 shows a compositional bias: polar residues; it reads GDSSTSADVPTAGSGNQVPDSAASTA. Helical transmembrane passes span 370-390, 436-456, and 514-534; these read WGWS…PLSA, LGGC…YWVL, and PIIF…YWVV.

Belongs to the OXA1/ALB3/YidC family. Type 1 subfamily. In terms of assembly, interacts with the Sec translocase complex via SecD. Specifically interacts with transmembrane segments of nascent integral membrane proteins during membrane integration.

Its subcellular location is the cell inner membrane. Its function is as follows. Required for the insertion and/or proper folding and/or complex formation of integral membrane proteins into the membrane. Involved in integration of membrane proteins that insert both dependently and independently of the Sec translocase complex, as well as at least some lipoproteins. Aids folding of multispanning membrane proteins. This Azotobacter vinelandii (strain DJ / ATCC BAA-1303) protein is Membrane protein insertase YidC.